The chain runs to 164 residues: Protein-export protein SecB (164 aa).

It belongs to the SecB family. As to quaternary structure, homotetramer, a dimer of dimers. One homotetramer interacts with 1 SecA dimer.

It localises to the cytoplasm. Functionally, one of the proteins required for the normal export of preproteins out of the cell cytoplasm. It is a molecular chaperone that binds to a subset of precursor proteins, maintaining them in a translocation-competent state. It also specifically binds to its receptor SecA. This is Protein-export protein SecB from Rhodopseudomonas palustris (strain BisB18).